Here is a 259-residue protein sequence, read N- to C-terminus: Caffeoyl-CoA O-methyltransferase 1 (259 aa).

The segment covering 1–14 (MATTTTEATKTSST) has biased composition (low complexity). Positions 1 to 29 (MATTTTEATKTSSTNGEDQKQSQNLRHQE) are disordered. A2 carries the N-acetylalanine modification. K33 contributes to the substrate binding site. Residues T75, E97, 99-100 (GV), S105, D123, and A152 each bind S-adenosyl-L-methionine. D175 is a substrate binding site. An a divalent metal cation-binding site is contributed by D175. D177 serves as a coordination point for S-adenosyl-L-methionine. Residues D201 and N202 each contribute to the a divalent metal cation site. Position 206 (N206) interacts with substrate.

It belongs to the class I-like SAM-binding methyltransferase superfamily. Cation-dependent O-methyltransferase family. CCoAMT subfamily. A divalent metal cation is required as a cofactor. Expressed in stems and roots. Detected in leaves, siliques, flower buds, flowers. Expressed in the tapetum, but not in the endothecium. Detected in the vascular system of leaves and all flower organs, including stigma, stamens, petals and sepals.

The enzyme catalyses (E)-caffeoyl-CoA + S-adenosyl-L-methionine = (E)-feruloyl-CoA + S-adenosyl-L-homocysteine + H(+). Its pathway is aromatic compound metabolism; phenylpropanoid biosynthesis. In terms of biological role, methylates caffeoyl-CoA to feruloyl-CoA. Has a very low activity with caffeic acid and esculetin. Involved in scopoletin biosynthesis in roots. This is Caffeoyl-CoA O-methyltransferase 1 (CCOAOMT1) from Arabidopsis thaliana (Mouse-ear cress).